The following is a 43-amino-acid chain: Potassium channel toxin gamma-KTx 4.5 (43 aa).

4 cysteine pairs are disulfide-bonded: Cys5-Cys23, Cys11-Cys34, Cys20-Cys39, and Cys24-Cys41.

It belongs to the ergtoxin family. Gamma-KTx 4 subfamily. In terms of tissue distribution, expressed by the venom gland.

The protein localises to the secreted. Reversibly blocks Kv11/ERG potassium channels. The sequence is that of Potassium channel toxin gamma-KTx 4.5 from Centruroides exilicauda (Bark scorpion).